The chain runs to 411 residues: Serine--tRNA ligase (411 aa).

226 to 228 (TSE) serves as a coordination point for L-serine. 257–259 (RKE) is a binding site for ATP. Glu-280 serves as a coordination point for L-serine. An ATP-binding site is contributed by 344–347 (EISS). Ser-379 contributes to the L-serine binding site.

It belongs to the class-II aminoacyl-tRNA synthetase family. Type-1 seryl-tRNA synthetase subfamily. In terms of assembly, homodimer. The tRNA molecule binds across the dimer.

The protein localises to the cytoplasm. The catalysed reaction is tRNA(Ser) + L-serine + ATP = L-seryl-tRNA(Ser) + AMP + diphosphate + H(+). It catalyses the reaction tRNA(Sec) + L-serine + ATP = L-seryl-tRNA(Sec) + AMP + diphosphate + H(+). It functions in the pathway aminoacyl-tRNA biosynthesis; selenocysteinyl-tRNA(Sec) biosynthesis; L-seryl-tRNA(Sec) from L-serine and tRNA(Sec): step 1/1. Its function is as follows. Catalyzes the attachment of serine to tRNA(Ser). Is also able to aminoacylate tRNA(Sec) with serine, to form the misacylated tRNA L-seryl-tRNA(Sec), which will be further converted into selenocysteinyl-tRNA(Sec). This Campylobacter jejuni (strain RM1221) protein is Serine--tRNA ligase.